A 367-amino-acid polypeptide reads, in one-letter code: Auxin efflux carrier component 8 (367 aa).

At 1-6 (MISWLD) the chain is on the extracellular side. The chain crosses the membrane as a helical span at residues 7–27 (IYHVVSATVPLYVSMTLGFLS). Residues 28–38 (ARHLKLFSPEQ) are Cytoplasmic-facing. The chain crosses the membrane as a helical span at residues 39–59 (CAGINKFVAKFSIPLLSFQII). Residue Ile-51 participates in (indol-3-yl)acetate binding. Residues 60-69 (SENNPFKMSP) are Extracellular-facing. The chain crosses the membrane as a helical span at residues 70-90 (KLILSDILQKFLVVVVLAMVL). Residues 91-105 (RFWHPTGGRGGKLGW) are Cytoplasmic-facing. A helical transmembrane segment spans residues 106-126 (VITGLSISVLPNTLILGMPIL). 2 residues coordinate (indol-3-yl)acetate: Asn-117 and Leu-119. Topologically, residues 127-136 (SAIYGDEAAS) are extracellular. The chain crosses the membrane as a helical span at residues 137 to 157 (ILEQIVVLQSLIWYTILLFLF). Tyr-150 lines the (indol-3-yl)acetate pocket. Topologically, residues 158–227 (ELNAARALPS…LIINPNTYAT (70 aa)) are cytoplasmic. The disordered stretch occupies residues 168–194 (SGASLEHTGNDQEEANIEDEPKEEEDE). A compositionally biased stretch (acidic residues) spans 178–194 (DQEEANIEDEPKEEEDE). The chain crosses the membrane as a helical span at residues 228 to 248 (LIGIIWATLHFRLGWNLPEMI). Residues 249 to 251 (DKS) lie on the Extracellular side of the membrane. Residues 252-272 (IHLLSDGGLGMAMFSLGLFMA) traverse the membrane as a helical segment. The Cytoplasmic portion of the chain corresponds to 273–288 (SQSSIIACGTKMAIIT). The chain crosses the membrane as a helical span at residues 289-309 (MLLKFVLGPALMIASAYCIRL). Topologically, residues 310–312 (KST) are extracellular. The helical transmembrane segment at 313-333 (LFKVAILQAALPQGVVPFVFA) threads the bilayer. (indol-3-yl)acetate-binding residues include Val-327 and Val-328. The Cytoplasmic segment spans residues 334–344 (KEYNLHPEIIS). The helical transmembrane segment at 345 to 365 (TGVIFGMLIALPTTLAYYFLL) threads the bilayer. Over 366–367 (DL) the chain is Extracellular.

It belongs to the auxin efflux carrier (TC 2.A.69.1) family. As to quaternary structure, homodimer. In terms of tissue distribution, expressed in veins of mature leaves. Strongly expressed in pollen.

It localises to the endoplasmic reticulum membrane. Its subcellular location is the cell membrane. With respect to regulation, auxin efflux carrier activity is competitively inhibited by naptalamate (N-1-naphthylphthalamic acid, NPA). Its function is as follows. Acts as a component of the auxin efflux carrier. Component of the intracellular auxin-transport pathway in the male gametophyte. Involved in the regulation of auxin homeostasis in pollen. Involved in the efflux of auxin from the endoplasmic reticulum into the cytoplasm. Binds auxins including indole-3-acetic acid (IAA), naphthaleneacetic acid (NAA) and the herbicide 2,4-dichlorophenoxyacetic acid (2,4-D), but barely indole-3-butyric acid (IBA) and 2-phenylacetic acid (PAA). PIN5 and PIN8 may have an antagonistic/compensatory activity. Involved in the control of vein patterning. Redundantly with PIN6, inhibits the vein-formation-promoting functions of PIN5. PIN5, PIN6, and PIN8 control vein network geometry, but they are expressed in mutually exclusive domains of leaf vascular cells. The polypeptide is Auxin efflux carrier component 8 (Arabidopsis thaliana (Mouse-ear cress)).